Consider the following 110-residue polypeptide: Small EDRK-rich factor 1 (110 aa).

Residues Met-1–Ser-30 show a composition bias toward basic and acidic residues. Residues Met-1–Arg-61 form a disordered region. The segment at Arg-11 to Lys-17 is required for SNCA binding. Over residues Ser-34 to Ser-50 the composition is skewed to low complexity.

Belongs to the SERF family. In terms of assembly, interacts with SNCA; this interaction promotes the aggregation of SNCA. Isoform Long is predominantly expressed in heart, brain and skeletal muscle. Isoform Short and Isoform Long are expressed throughout the central nervous system, including spinal cord.

The protein localises to the cytoplasm. The protein resides in the cytosol. Its subcellular location is the nucleus. Functionally, positive regulator of amyloid protein aggregation and proteotoxicity. Induces conformational changes in amyloid proteins, such as APP, HTT, and SNCA, driving them into compact formations preceding the formation of aggregates. The sequence is that of Small EDRK-rich factor 1 (SERF1A) from Homo sapiens (Human).